A 492-amino-acid polypeptide reads, in one-letter code: Phosphatidylglycerol--prolipoprotein diacylglyceryl transferase (492 aa).

The next 9 membrane-spanning stretches (helical) occupy residues 40–60 (IFGI…YVGW), 72–92 (AIRQ…VVVP), 106–126 (VAVR…VGLA), 133–153 (AGLG…GGLL), 184–204 (QGGL…LIAL), 214–234 (IGDV…LGCL), 361–381 (VWGT…VLLI), 409–429 (GVLM…LEWI), and 441–461 (LSIS…TLFI). Arg-230 provides a ligand contact to a 1,2-diacyl-sn-glycero-3-phospho-(1'-sn-glycerol).

This sequence belongs to the Lgt family.

It localises to the cell inner membrane. The catalysed reaction is L-cysteinyl-[prolipoprotein] + a 1,2-diacyl-sn-glycero-3-phospho-(1'-sn-glycerol) = an S-1,2-diacyl-sn-glyceryl-L-cysteinyl-[prolipoprotein] + sn-glycerol 1-phosphate + H(+). The protein operates within protein modification; lipoprotein biosynthesis (diacylglyceryl transfer). Functionally, catalyzes the transfer of the diacylglyceryl group from phosphatidylglycerol to the sulfhydryl group of the N-terminal cysteine of a prolipoprotein, the first step in the formation of mature lipoproteins. This chain is Phosphatidylglycerol--prolipoprotein diacylglyceryl transferase, found in Rhodopirellula baltica (strain DSM 10527 / NCIMB 13988 / SH1).